A 529-amino-acid polypeptide reads, in one-letter code: Cytochrome P450 monooxygenase fsoB (529 aa).

A helical transmembrane segment spans residues 4–24; it reads WLLSLLIAGVVFAIFQLRTVG. Cys-436 is a heme binding site.

The protein belongs to the cytochrome P450 family. Heme serves as cofactor.

It is found in the membrane. In terms of biological role, cytochrome P450 monooxygenase; part of the gene cluster that mediates the biosynthesis of the enfumafungin-type antibiotic fuscoatroside. Four enzymes are sufficient to produce fuscoatroside: the terpene cyclase-glycosyl transferase fusion protein fsoAthe cytochrome P450 monoxygenases fsoD and fsoE, and the acetyltransferase fsoF; the cytochrome P450 monooxygenase fsoB and the glucose oxidase-like protein fsoC do not seem to play a role in biosynthesis of fuscoatroside. The chain is Cytochrome P450 monooxygenase fsoB from Humicola fuscoatra.